The following is a 428-amino-acid chain: Enolase (428 aa).

Gln-163 contacts (2R)-2-phosphoglycerate. Glu-205 acts as the Proton donor in catalysis. Residues Asp-242, Glu-286, and Asp-313 each coordinate Mg(2+). (2R)-2-phosphoglycerate is bound by residues Lys-338, Arg-367, Ser-368, and Lys-389. Catalysis depends on Lys-338, which acts as the Proton acceptor.

Belongs to the enolase family. Mg(2+) is required as a cofactor.

It localises to the cytoplasm. The protein localises to the secreted. The protein resides in the cell surface. It catalyses the reaction (2R)-2-phosphoglycerate = phosphoenolpyruvate + H2O. The protein operates within carbohydrate degradation; glycolysis; pyruvate from D-glyceraldehyde 3-phosphate: step 4/5. In terms of biological role, catalyzes the reversible conversion of 2-phosphoglycerate (2-PG) into phosphoenolpyruvate (PEP). It is essential for the degradation of carbohydrates via glycolysis. This Lactobacillus helveticus (strain DPC 4571) protein is Enolase.